Consider the following 530-residue polypeptide: UDP-glucuronosyltransferase 1A8 (530 aa).

The signal sequence occupies residues 1-25 (MARTGWTSPIPLCVSLLLTCGFAEA). N-linked (GlcNAc...) asparagine glycans are attached at residues Asn71, Asn292, and Asn344. The helical transmembrane segment at 488–504 (VIGFLLAVVLTVAFITF) threads the bilayer.

This sequence belongs to the UDP-glycosyltransferase family. In terms of assembly, homodimer. Homooligomer. Interacts with UGT1A1, UGT1A3, UGT1A4, UGT1A6, UGT1A7, UGT1A9 and UGT1A10 to form heterodimers. Isoform 1 interacts with isoform 2/i2 suggesting that oligomerization is involved in negative regulation of transferase activity by isoform 2. Isoform 1 also interacts with respective i2 isoforms of UGT1A1, UGT1A3, UGT1A4, UGT1A6, UGT1A7, UGT1A9 and UGT1A10. In terms of tissue distribution, expressed in kidney, colon and small intestine. Not expressed in liver. Expressed in liver, kidney, colon and small intestine.

It localises to the endoplasmic reticulum membrane. The catalysed reaction is glucuronate acceptor + UDP-alpha-D-glucuronate = acceptor beta-D-glucuronoside + UDP + H(+). It carries out the reaction 17beta-estradiol + UDP-alpha-D-glucuronate = 17beta-estradiol 3-O-(beta-D-glucuronate) + UDP + H(+). The enzyme catalyses 17alpha-estradiol + UDP-alpha-D-glucuronate = 17alpha-estradiol 3-O-(beta-D-glucuronate) + UDP + H(+). It catalyses the reaction estrone + UDP-alpha-D-glucuronate = estrone 3-O-(beta-D-glucuronate) + UDP + H(+). The catalysed reaction is 16alpha,17alpha-estriol + UDP-alpha-D-glucuronate = 16alpha,17alpha-estriol 3-O-(beta-D-glucuronate) + UDP + H(+). It carries out the reaction 2-hydroxy-17beta-estradiol + UDP-alpha-D-glucuronate = 2-hydroxy-17beta-estradiol 3-O-(beta-D-glucuronate) + UDP + H(+). The enzyme catalyses 2-hydroxy-17beta-estradiol + UDP-alpha-D-glucuronate = 17beta-estradiol 2-O-(beta-D-glucuronate) + UDP + H(+). It catalyses the reaction 2-hydroxyestrone + UDP-alpha-D-glucuronate = 2-hydroxyestrone 3-O-(beta-D-glucuronate) + UDP + H(+). The catalysed reaction is 4-hydroxy-17beta-estradiol + UDP-alpha-D-glucuronate = 4-hydroxy-17beta-estradiol 3-O-(beta-D-glucuronate) + UDP + H(+). It carries out the reaction 4-hydroxy-17beta-estradiol + UDP-alpha-D-glucuronate = 17beta-estradiol 4-O-(beta-D-glucuronate) + UDP + H(+). The enzyme catalyses 4-hydroxyestrone + UDP-alpha-D-glucuronate = 4-hydroxyestrone 3-O-(beta-D-glucuronate) + UDP + H(+). It catalyses the reaction 4-hydroxyestrone + UDP-alpha-D-glucuronate = estrone 4-O-(beta-D-glucuronate) + UDP + H(+). The catalysed reaction is 2-methoxy-17beta-estradiol + UDP-alpha-D-glucuronate = 2-methoxy-17beta-estradiol 3-O-(beta-D-glucuronate) + UDP + H(+). It carries out the reaction 2-methoxyestrone + UDP-alpha-D-glucuronate = 2-methoxyestrone 3-O-(beta-D-glucuronate) + UDP + H(+). The enzyme catalyses 4-methoxy-17beta-estradiol + UDP-alpha-D-glucuronate = 4-methoxy-17beta-estradiol 3-O-(beta-D-glucuronate) + UDP + H(+). It catalyses the reaction 4-methoxyestrone + UDP-alpha-D-glucuronate = 4-methoxyestrone 3-O-(beta-D-glucuronate) + UDP + H(+). The catalysed reaction is 17beta-hydroxy-5alpha-androstan-3-one + UDP-alpha-D-glucuronate = 5alpha-dihydrotestosterone 17-O-(beta-D-glucuronate) + UDP + H(+). It carries out the reaction 5alpha-dihydrotestosterone 17-O-(beta-D-glucuronate) + UDP-alpha-D-glucuronate = 5alpha-dihydrotestosterone 17-O-[beta-D-glucuronosyl-(1-&gt;2)-glucuronate] + UDP + H(+). The enzyme catalyses prunetin + UDP-alpha-D-glucuronate = prunetin-4'-O-beta-D-glucuronide + UDP. It catalyses the reaction prunetin + UDP-alpha-D-glucuronate = prunetin-5-O-beta-D-glucuronide + UDP. The catalysed reaction is candesartan + UDP-alpha-D-glucuronate = candesartan O-beta-D-glucuronoside + UDP. It carries out the reaction mycophenolate + UDP-alpha-D-glucuronate = mycophenolate 7-O-beta-D-glucuronide + UDP + H(+). The enzyme catalyses (E)-ferulate + UDP-alpha-D-glucuronate = (E)-4-O-(beta-D-glucuronosyl)-ferulate + UDP + H(+). It catalyses the reaction (E)-ferulate + UDP-alpha-D-glucuronate = (E)-ferulic acid beta-D-glucuronate ester + UDP. Its function is as follows. UDP-glucuronosyltransferase (UGT) that catalyzes phase II biotransformation reactions in which lipophilic substrates are conjugated with glucuronic acid to increase the metabolite's water solubility, thereby facilitating excretion into either the urine or bile. Essential for the elimination and detoxification of drugs, xenobiotics and endogenous compounds. Catalyzes the glucuronidation of endogenous steroid hormones such as androgens and estrogens. Produces dihydrotestosterone (DHT) diglucuronide from the DHT after two subsequent glucoronidation steps. Involved in the glucuronidation of the phytochemical ferulic acid at the phenolic or the carboxylic acid group. Also catalyzes the glucuronidation of the isoflavones genistein, daidzein, glycitein, formononetin, biochanin A and prunetin, which are phytoestrogens with anticancer and cardiovascular properties. Involved in the glucuronidation of the AGTR1 angiotensin receptor antagonist caderastan, a drug which can inhibit the effect of angiotensin II. Also metabolizes mycophenolate, an immunosuppressive agent. Functionally, lacks UGT glucuronidation activity but acts as a negative regulator of isoform 1. This chain is UDP-glucuronosyltransferase 1A8, found in Homo sapiens (Human).